The chain runs to 231 residues: Ribose-5-phosphate isomerase A (231 aa).

Substrate-binding positions include 28 to 31 (TGST), 83 to 86 (DGAD), and 96 to 99 (KGGG). The Proton acceptor role is filled by Glu-105. Position 123 (Lys-123) interacts with substrate.

Belongs to the ribose 5-phosphate isomerase family. In terms of assembly, homodimer.

The enzyme catalyses aldehydo-D-ribose 5-phosphate = D-ribulose 5-phosphate. The protein operates within carbohydrate degradation; pentose phosphate pathway; D-ribose 5-phosphate from D-ribulose 5-phosphate (non-oxidative stage): step 1/1. Catalyzes the reversible conversion of ribose-5-phosphate to ribulose 5-phosphate. In Rhizobium meliloti (strain 1021) (Ensifer meliloti), this protein is Ribose-5-phosphate isomerase A.